Consider the following 156-residue polypeptide: Ribosomal RNA large subunit methyltransferase H (156 aa).

S-adenosyl-L-methionine-binding positions include L73, G104, and 123–128 (LSPLTL).

This sequence belongs to the RNA methyltransferase RlmH family. As to quaternary structure, homodimer.

It localises to the cytoplasm. It catalyses the reaction pseudouridine(1915) in 23S rRNA + S-adenosyl-L-methionine = N(3)-methylpseudouridine(1915) in 23S rRNA + S-adenosyl-L-homocysteine + H(+). Its function is as follows. Specifically methylates the pseudouridine at position 1915 (m3Psi1915) in 23S rRNA. This is Ribosomal RNA large subunit methyltransferase H from Photorhabdus laumondii subsp. laumondii (strain DSM 15139 / CIP 105565 / TT01) (Photorhabdus luminescens subsp. laumondii).